We begin with the raw amino-acid sequence, 1370 residues long: Reverse gyrase 1 (1370 aa).

The RG N-terminal-type zinc-finger motif lies at 6–47 (AASRGVYRYLCPNCGGPNSEERLSRGLPCPRCLPRLPRKGVS). Residues Cys-16, Cys-19, Cys-34, and Cys-37 each coordinate Zn(2+). ATP is bound by residues Gln-95 and 112-119 (APTGVGKT). Residues 99–287 (AKRLARGDSF…RKKLLEVKRR (189 aa)) enclose the Helicase ATP-binding domain. Positions 220–223 (DDVD) match the DEAD box motif. The segment at 643–1370 (ELVRTALLVV…VSRVWGAGVG (728 aa)) is topoisomerase I. Residues 647–825 (TALLVVESPN…DIKRLEFHEV (179 aa)) form the Toprim domain. Glu-653 contributes to the Mg(2+) binding site. The segment at 744–772 (IKRCLDCGYQFVDEASRCPRCGSELIRNS) adopts an RG C-terminal-type zinc-finger fold. Residues Cys-747, Cys-750, Cys-761, and Cys-764 each contribute to the Zn(2+) site. Asp-794 provides a ligand contact to Mg(2+). Residues 841–1323 (DDNLVDAQVV…SVFNEISDLA (483 aa)) enclose the Topo IA-type catalytic domain. The active-site O-(5'-phospho-DNA)-tyrosine intermediate is the Tyr-1028.

The protein in the N-terminal section; belongs to the DEAD box helicase family. DDVD subfamily. It in the C-terminal section; belongs to the type IA topoisomerase family. As to quaternary structure, monomer. The cofactor is Zn(2+). It depends on Mg(2+) as a cofactor.

The protein resides in the cytoplasm. The enzyme catalyses ATP + H2O = ADP + phosphate + H(+). Functionally, modifies the topological state of DNA by introducing positive supercoils in an ATP-dependent process, increasing the linking number in steps of +1. Binds to single-stranded DNA, transiently cleaves and then rejoins the ends, introducing a positive supercoil in the process. The scissile phosphodiester is attacked by the catalytic tyrosine of the enzyme, resulting in the formation of a DNA-(5'-phosphotyrosyl)-enzyme intermediate. Probably involved in rewinding DNA strands in regions of the chromosome that have opened up to allow replication, transcription, DNA repair and/or for DNA protection. The polypeptide is Reverse gyrase 1 (Aeropyrum pernix (strain ATCC 700893 / DSM 11879 / JCM 9820 / NBRC 100138 / K1)).